The primary structure comprises 448 residues: uncharacterized protein (448 aa).

Over residues 187–198 (SKGDRGDADDRG) the composition is skewed to basic and acidic residues. Disordered stretches follow at residues 187 to 221 (SKGDRGDADDRGPASVGSGGAPARGAGQQPELPTR), 243 to 270 (LQVPGGTSAAIPSASSTPSLPNLGGATM), and 291 to 361 (LSGL…LPNG). Positions 243–261 (LQVPGGTSAAIPSASSTPS) are enriched in low complexity. Residues 307-334 (FDERGQEVRDPADYEHANEPDERRADDR) show a composition bias toward basic and acidic residues.

This sequence to M.tuberculosis Rv0025 and Rv0739.

This is an uncharacterized protein from Mycobacterium tuberculosis (strain CDC 1551 / Oshkosh).